The chain runs to 538 residues: Chaperonin GroEL (538 aa).

ATP is bound by residues 29–32 (TLGP), 86–90 (DGTTT), G413, 476–478 (NAA), and D492.

It belongs to the chaperonin (HSP60) family. Forms a cylinder of 14 subunits composed of two heptameric rings stacked back-to-back. Interacts with the co-chaperonin GroES.

It is found in the cytoplasm. The catalysed reaction is ATP + H2O + a folded polypeptide = ADP + phosphate + an unfolded polypeptide.. Together with its co-chaperonin GroES, plays an essential role in assisting protein folding. The GroEL-GroES system forms a nano-cage that allows encapsulation of the non-native substrate proteins and provides a physical environment optimized to promote and accelerate protein folding. This is Chaperonin GroEL from Bacillus sp. (strain PS3).